We begin with the raw amino-acid sequence, 158 residues long: MIYLPLLLAEEIEGGLFDFNGTLPLMALQFLILMLLLNTIFYKPVTKILDERDEYIRTTLTTASSMLVKADELAAKYEEDLSKARRDAQAKIAASQKDAQSIVSEDIKKAQMNAEKLITEASKQLNIQKEEALKTLEDQVDTLSDQIKTKLLSSQSLK.

A helical transmembrane segment spans residues 21–41 (GTLPLMALQFLILMLLLNTIF).

This sequence belongs to the ATPase B chain family. As to quaternary structure, F-type ATPases have 2 components, F(1) - the catalytic core - and F(0) - the membrane proton channel. F(1) has five subunits: alpha(3), beta(3), gamma(1), delta(1), epsilon(1). F(0) has four main subunits: a(1), b(1), b'(1) and c(10-14). The alpha and beta chains form an alternating ring which encloses part of the gamma chain. F(1) is attached to F(0) by a central stalk formed by the gamma and epsilon chains, while a peripheral stalk is formed by the delta, b and b' chains.

The protein resides in the plastid. It is found in the chloroplast thylakoid membrane. Its function is as follows. F(1)F(0) ATP synthase produces ATP from ADP in the presence of a proton or sodium gradient. F-type ATPases consist of two structural domains, F(1) containing the extramembraneous catalytic core and F(0) containing the membrane proton channel, linked together by a central stalk and a peripheral stalk. During catalysis, ATP synthesis in the catalytic domain of F(1) is coupled via a rotary mechanism of the central stalk subunits to proton translocation. Functionally, component of the F(0) channel, it forms part of the peripheral stalk, linking F(1) to F(0). The b'-subunit is a diverged and duplicated form of b found in plants and photosynthetic bacteria. In Porphyra purpurea (Red seaweed), this protein is ATP synthase subunit b', chloroplastic.